Reading from the N-terminus, the 257-residue chain is MLLGVNIDHIAVLRQARMVNDPDLLEAAFIAAKHGDQITLHVREDRRHAQDFDLENIIKFCKSPINLECALNDEILNLALKLKPHRVTLVPEKREELTTEGGLCLNHTKLKQSIEKLQNANIEVSLFINPSLEDIEKSKNLKAQFIELHTGHYANLHNALFSNISHTAFALKELGQDKKNLQAQFEKELQNLELCAKKGTELGLKVAAGHGLNYKNVKPVVKIKEICELNIGQSIVARSVFTGLQNAILEMKELIKR.

Residue asparagine 6 coordinates 3-amino-2-oxopropyl phosphate. Aspartate 8–histidine 9 contacts 1-deoxy-D-xylulose 5-phosphate. Position 17 (arginine 17) interacts with 3-amino-2-oxopropyl phosphate. Histidine 41 functions as the Proton acceptor in the catalytic mechanism. Positions 43 and 48 each coordinate 1-deoxy-D-xylulose 5-phosphate. The Proton acceptor role is filled by glutamate 68. Position 98 (threonine 98) interacts with 1-deoxy-D-xylulose 5-phosphate. The active-site Proton donor is histidine 210. 3-amino-2-oxopropyl phosphate is bound by residues glycine 211 and glycine 232–glutamine 233.

The protein belongs to the PNP synthase family. Homooctamer; tetramer of dimers.

It is found in the cytoplasm. It catalyses the reaction 3-amino-2-oxopropyl phosphate + 1-deoxy-D-xylulose 5-phosphate = pyridoxine 5'-phosphate + phosphate + 2 H2O + H(+). The protein operates within cofactor biosynthesis; pyridoxine 5'-phosphate biosynthesis; pyridoxine 5'-phosphate from D-erythrose 4-phosphate: step 5/5. Functionally, catalyzes the complicated ring closure reaction between the two acyclic compounds 1-deoxy-D-xylulose-5-phosphate (DXP) and 3-amino-2-oxopropyl phosphate (1-amino-acetone-3-phosphate or AAP) to form pyridoxine 5'-phosphate (PNP) and inorganic phosphate. The polypeptide is Pyridoxine 5'-phosphate synthase (Campylobacter jejuni subsp. jejuni serotype O:6 (strain 81116 / NCTC 11828)).